The sequence spans 425 residues: Serine--tRNA ligase (425 aa).

228–230 (TAE) serves as a coordination point for L-serine. ATP is bound at residue 259–261 (RSE). E282 serves as a coordination point for L-serine. 346–349 (EIAS) is a binding site for ATP. S382 is an L-serine binding site.

It belongs to the class-II aminoacyl-tRNA synthetase family. Type-1 seryl-tRNA synthetase subfamily. In terms of assembly, homodimer. The tRNA molecule binds across the dimer.

The protein localises to the cytoplasm. The catalysed reaction is tRNA(Ser) + L-serine + ATP = L-seryl-tRNA(Ser) + AMP + diphosphate + H(+). It carries out the reaction tRNA(Sec) + L-serine + ATP = L-seryl-tRNA(Sec) + AMP + diphosphate + H(+). It functions in the pathway aminoacyl-tRNA biosynthesis; selenocysteinyl-tRNA(Sec) biosynthesis; L-seryl-tRNA(Sec) from L-serine and tRNA(Sec): step 1/1. Catalyzes the attachment of serine to tRNA(Ser). Is also able to aminoacylate tRNA(Sec) with serine, to form the misacylated tRNA L-seryl-tRNA(Sec), which will be further converted into selenocysteinyl-tRNA(Sec). The protein is Serine--tRNA ligase of Rickettsia felis (strain ATCC VR-1525 / URRWXCal2) (Rickettsia azadi).